The following is a 299-amino-acid chain: Sulfate adenylyltransferase subunit 2 (299 aa).

This sequence belongs to the PAPS reductase family. CysD subfamily. In terms of assembly, sulfate-activating enzymes, NodP and NodQ, may be physically associated.

The enzyme catalyses sulfate + ATP + H(+) = adenosine 5'-phosphosulfate + diphosphate. Proposed to provide activated sulfate for transfer to nod factor. In Rhizobium sp. (strain BR816), this protein is Sulfate adenylyltransferase subunit 2 (nodP).